We begin with the raw amino-acid sequence, 121 residues long: Ribosome-binding factor A (121 aa).

Belongs to the RbfA family. In terms of assembly, monomer. Binds 30S ribosomal subunits, but not 50S ribosomal subunits or 70S ribosomes.

It localises to the cytoplasm. Functionally, one of several proteins that assist in the late maturation steps of the functional core of the 30S ribosomal subunit. Associates with free 30S ribosomal subunits (but not with 30S subunits that are part of 70S ribosomes or polysomes). Required for efficient processing of 16S rRNA. May interact with the 5'-terminal helix region of 16S rRNA. The chain is Ribosome-binding factor A from Clostridium acetobutylicum (strain ATCC 824 / DSM 792 / JCM 1419 / IAM 19013 / LMG 5710 / NBRC 13948 / NRRL B-527 / VKM B-1787 / 2291 / W).